The following is a 316-amino-acid chain: METSLPITVVFLIVLITGAQTKPTQGSCTLTDEDISDIKSAVQKASKAAVNDIVLDPTLIDKCPMLEKITASLKSVATEIVQMRDSAISTDQVDQLKQNFEDQVNQIVKSRDIFEKQSGTQATKEHGEMLERMTALQVKVTELEQQIAKQTASMYEDMAELIFQRLQMNSTESVRSYTKHMMEEKLEELMNKLETNYRIYLGALRFLNHMNDQELIGKVFDGILKRLGDMKADSDDVKENGRNLLVNLLCWTVNNDFLGKKYKERQVDLYRMALKFYPKTYEKAANEADVRSRQFCEENFPANLITWFAVSWNDRG.

The N-terminal stretch at 1–21 is a signal peptide; that stretch reads METSLPITVVFLIVLITGAQT. Residues 126–316 are involved in interaction with human CD47; the sequence is HGEMLERMTA…WFAVSWNDRG (191 aa). N-linked (GlcNAc...) asparagine glycosylation is present at N169.

As to quaternary structure, interacts with human CD4. Interacts with human CD47; the interaction results in inhibition of phagocytosis activity of host macrophages. Female salivary gland (at protein level). Saliva (at protein level). Some expression in ovary and midgut (at protein level).

The protein localises to the secreted. Functionally, activates host neutrophils; induces expression of IL1B and CXCL2 at the bite site. Promotes activation of human CD4(+) T-cells. Inhibits phagocytosis activity of host macrophages via the interaction with CD47 receptor on their surface. Suppresses expression of pro-inflammatory cytokines, such as IFN-gamma/IFNG, IL2, TNF-alpha/TNF, IL12B, IL8/CXCL8, IL6, in host white blood cells. Reduces host polymorphonuclear neutrophil chemotaxis induced by N-formylmethionine-leucylphenylalanine (fMLF). Reduces CD11b/ITGAM expression in fMLF-induced host polymorphonuclear neutrophils. In terms of biological role, (Microbial infection) Enhances early replication of Zika virus in the host. The protein is Neutrophil-stimulating factor 1 of Aedes aegypti (Yellowfever mosquito).